The sequence spans 154 residues: Protein X (154 aa).

A disordered region spans residues 28–48; it reads RPLPGPLGTLPPASPPAVPTD. Positions 68-117 are mitochondrial targeting sequence; it reads PCALRFTSARRMETTVNAHGNLPKVLHKRTLGLSAMSTTDLEAYFKDCVF.

The protein belongs to the orthohepadnavirus protein X family. In terms of assembly, may form homodimer. May interact with host CEBPA, CFLAR, CREB1, DDB1, E4F1, HBXIP, HSPD1/HSP60, NFKBIA, POLR2E and SMAD4. Interacts with host SMC5-SMC6 complex and induces its degradation. Interacts with host TRPC4AP; leading to prevent ubiquitination of TRPC4AP. Interacts with host PLSCR1; this interaction promotes ubiquitination and degradation of HBx and impairs HBx-mediated cell proliferation. Post-translationally, a fraction may be phosphorylated in insect cells and HepG2 cells, a human hepatoblastoma cell line. Phosphorylated in vitro by host protein kinase C or mitogen-activated protein kinase. N-acetylated in insect cells.

The protein localises to the host cytoplasm. The protein resides in the host nucleus. It is found in the host mitochondrion. In terms of biological role, multifunctional protein that plays a role in silencing host antiviral defenses and promoting viral transcription. Does not seem to be essential for HBV infection. May be directly involved in development of cirrhosis and liver cancer (hepatocellular carcinoma). Most of cytosolic activities involve modulation of cytosolic calcium. The effect on apoptosis is controversial depending on the cell types in which the studies have been conducted. May induce apoptosis by localizing in mitochondria and causing loss of mitochondrial membrane potential. May also modulate apoptosis by binding host CFLAR, a key regulator of the death-inducing signaling complex (DISC). Promotes viral transcription by using the host E3 ubiquitin ligase DDB1 to target the SMC5-SMC6 complex to proteasomal degradation. This host complex would otherwise bind to viral episomal DNA, and prevents its transcription. Moderately stimulates transcription of many different viral and cellular transcription elements. Promoters and enhancers stimulated by HBx contain DNA binding sites for NF-kappa-B, AP-1, AP-2, c-EBP, ATF/CREB, or the calcium-activated factor NF-AT. The polypeptide is Protein X (Hepatitis B virus genotype B2 subtype adw (isolate China/patient4/1996) (HBV-B)).